The primary structure comprises 423 residues: MPKVTFSGSAPTLGVHAPPALDPRQPASPPPAASNGTHARGFSPPADMPTWSGTEGVRFDFNDGCRVLLPDGDWTVRLRDMHTDTPLFDAQIGAGVVTSTRKHFVPFLIEIDAGGRRVFKHLFDAHGKPVLIQFEAQRLGEALGWFGYAVKFQRQHRCKLTCSMPAPLIALLRPGYPDIEFVTPELVKPECYYATYRLGRFAGDEAHAYQPSAPQLVGAHRSAAYMLGVDPREAPPRIELTDDSRPLAGPYVCIAAQSALRCARWERPGGWRELQRFLTAAGYRIVCVDSPSPDVADESSALADVAYSLAPDTPWTERARWLRHAACLIGVPGDLSWLAWAVGAPVVLISGFTHPVSEFDTPYRVINSHACNSCWNDASANFDDADASSCPRHAGTLRQFECARLVSVEQIKRTIRSIPGIAC.

Positions 1 to 10 (MPKVTFSGSA) are enriched in polar residues. Positions 1–49 (MPKVTFSGSAPTLGVHAPPALDPRQPASPPPAASNGTHARGFSPPADMP) are disordered. Fe(3+) is bound by residues Cys371, Cys374, Cys390, and Cys402.

The protein belongs to the glycosyltransferase 9 family. In terms of assembly, homotrimer or homotetramer. Fe(3+) serves as cofactor.

The protein resides in the cell inner membrane. The protein localises to the cytoplasm. Functionally, iron-binding protein which is required for the asymmetric polar distribution of the autotransporter BimA on the bacterial surface prior to its translocation into bacterial periplasm. Lacks heptosyltransferase activity. The chain is Inactive autotransporter heptosyltransferase BimC from Burkholderia thailandensis (strain ATCC 700388 / DSM 13276 / CCUG 48851 / CIP 106301 / E264).